A 169-amino-acid chain; its full sequence is Myosin regulatory light chain 2, skeletal muscle isoform A (169 aa).

Residue Ser21 is modified to Phosphoserine. EF-hand domains follow at residues 26 to 61 (SQIQEYKEAFTIIDQNRDGIISKDDLRDVLASMGQL), 96 to 131 (DPEDVIVSAFKVLDPEGTGSIKKEFLEELLTTQCDR), and 132 to 167 (FTAEEMKNLWAAFPPDVAGNVDYKNICYVITHGEEK). 4 residues coordinate Ca(2+): Asp39, Asn41, Asp43, and Asp50.

In terms of assembly, myosin is a hexamer of 2 heavy chains and 4 light chains. Interacts with nanos3; the interaction negatively regulates mylpfa phosphorylation.

Myosin regulatory subunit that plays a role to maintain muscle integrity during early development. Plays a role in muscle contraction. In Danio rerio (Zebrafish), this protein is Myosin regulatory light chain 2, skeletal muscle isoform A (mylpfa).